The chain runs to 173 residues: MAEKRNIFLVGPMGAGKSTIGRQLAQQLNMEFYDSDHEIEKRTGADVGWVFDVEGEEGFRDREEKVINELTEKQGIVLATGGGSVKSRETRNRLSARGVVVYLETTIEKQLARTQRDKKRPLLQVETPPREVLEALAGERNPLYEEIADVTIRTDDQSAKVVANQIIHMLESN.

14–19 (GAGKST) contributes to the ATP binding site. Position 18 (S18) interacts with Mg(2+). Positions 36, 60, and 82 each coordinate substrate. ATP is bound at residue R120. Residue R140 coordinates substrate. Q157 lines the ATP pocket.

The protein belongs to the shikimate kinase family. As to quaternary structure, monomer. Mg(2+) serves as cofactor.

Its subcellular location is the cytoplasm. The catalysed reaction is shikimate + ATP = 3-phosphoshikimate + ADP + H(+). The protein operates within metabolic intermediate biosynthesis; chorismate biosynthesis; chorismate from D-erythrose 4-phosphate and phosphoenolpyruvate: step 5/7. Catalyzes the specific phosphorylation of the 3-hydroxyl group of shikimic acid using ATP as a cosubstrate. The sequence is that of Shikimate kinase 1 from Enterobacter sp. (strain 638).